Reading from the N-terminus, the 169-residue chain is Der GTPase-activating protein YihI (169 aa).

Disordered stretches follow at residues 1–75 (MKPS…IPLG) and 144–169 (GLSY…LRGN). Over residues 10 to 19 (SKGHAKARRK) the composition is skewed to basic residues. A compositionally biased stretch (basic and acidic residues) spans 20-30 (TREELDQEARD). Basic residues predominate over residues 31–40 (RKRQKKRRGH). Positions 49–58 (GNTTSGSKGQ) are enriched in polar residues. Over residues 147–159 (YDDDEEEEEDEKQ) the composition is skewed to acidic residues. Residues 160 to 169 (EDMMRLLRGN) are compositionally biased toward basic and acidic residues.

The protein belongs to the YihI family. In terms of assembly, interacts with Der.

Its function is as follows. A GTPase-activating protein (GAP) that modifies Der/EngA GTPase function. May play a role in ribosome biogenesis. The protein is Der GTPase-activating protein YihI of Escherichia coli (strain 55989 / EAEC).